Consider the following 404-residue polypeptide: Ubiquitin-like modifier-activating enzyme 5 (404 aa).

S45 carries the phosphoserine modification. ATP-binding residues include G83, D104, K127, N150, and N184. Positions 226 and 229 each coordinate Zn(2+). Catalysis depends on C250, which acts as the Glycyl thioester intermediate. C303 and C308 together coordinate Zn(2+). The short motif at 334–346 (IIHEDNEWGIELV) is the UFM1-interacting sequence (UIS) element. The linker stretch occupies residues 347–377 (SEISEEELKKSSGPIPDLPEGIIVAYTVPQK). A phosphoserine mark is found at S358 and S393. The UFC1-binding sequence (UFC) motif lies at 389–404 (DSGESLEDLMAKMKNI).

The protein belongs to the ubiquitin-activating E1 family. UBA5 subfamily. As to quaternary structure, homodimer; homodimerization is required for UFM1 activation. Interacts (via UIS motif) with UFM1; binds UFM1 via a trans-binding mechanism in which UFM1 interacts with distinct sites in both subunits of the UBA5 homodimer. Interacts (via C-terminus) with UFC1. Interacts (via UIS motif) with GABARAPL2 and, with lower affinity, with GABARAP and GABARAPL1.

Its subcellular location is the cytoplasm. It is found in the nucleus. The protein resides in the endoplasmic reticulum membrane. It localises to the golgi apparatus. E1-like enzyme which specifically catalyzes the first step in ufmylation. Activates UFM1 by first adenylating its C-terminal glycine residue with ATP, and thereafter linking this residue to the side chain of a cysteine residue in E1, yielding a UFM1-E1 thioester and free AMP. Activates UFM1 via a trans-binding mechanism, in which UFM1 interacts with distinct sites in both subunits of the UBA5 homodimer. Trans-binding also promotes stabilization of the UBA5 homodimer, and enhances ATP-binding. Transfer of UFM1 from UBA5 to the E2-like enzyme UFC1 also takes place using a trans mechanism. Ufmylation plays a key role in various processes, such as ribosome recycling, response to DNA damage, interferon response or reticulophagy (also called ER-phagy). Ufmylation is essential for erythroid differentiation of both megakaryocytes and erythrocytes. This chain is Ubiquitin-like modifier-activating enzyme 5, found in Bos taurus (Bovine).